A 314-amino-acid polypeptide reads, in one-letter code: Cell division protein FtsQ (314 aa).

2 stretches are compositionally biased toward basic and acidic residues: residues 1–15 (MTEH…RVAD) and 30–57 (ESKD…ERRA). The interval 1–57 (MTEHNEDPQIERVADDAADEEAVTEPLATESKDEPAEHPEFEGPRRRARRERAERRA) is disordered. At 1 to 99 (MTEHNEDPQI…AARGVVRGLK (99 aa)) the chain is on the cytoplasmic side. A helical transmembrane segment spans residues 100 to 120 (ALLATVVLAVVGIGLGLALYF). The Extracellular portion of the chain corresponds to 121 to 314 (TPAMSAREIV…VSSPDLPTVK (194 aa)). Positions 124–192 (MSAREIVIIG…SALRITIVER (69 aa)) constitute a POTRA domain.

It belongs to the FtsQ/DivIB family. FtsQ subfamily.

The protein localises to the cell membrane. Its function is as follows. Essential cell division protein. This is Cell division protein FtsQ from Mycobacterium bovis (strain ATCC BAA-935 / AF2122/97).